The primary structure comprises 306 residues: Pantothenate kinase (306 aa).

Position 90–97 (90–97 (GSVAVGKS)) interacts with ATP.

The protein belongs to the prokaryotic pantothenate kinase family.

The protein resides in the cytoplasm. It carries out the reaction (R)-pantothenate + ATP = (R)-4'-phosphopantothenate + ADP + H(+). The protein operates within cofactor biosynthesis; coenzyme A biosynthesis; CoA from (R)-pantothenate: step 1/5. In Lactococcus lactis subsp. cremoris (strain SK11), this protein is Pantothenate kinase.